Reading from the N-terminus, the 348-residue chain is Ephrin-4 (348 aa).

The signal sequence occupies residues 1 to 20 (MKQFFEFLITTFLLLGLAAA). The region spanning 21–178 (DEHIVYWNST…SQNMRLSMKV (158 aa)) is the Ephrin RBD domain. Asn28 is a glycosylation site (N-linked (GlcNAc...) asparagine). Intrachain disulfides connect Cys53–Cys91 and Cys79–Cys167. N-linked (GlcNAc...) asparagine glycosylation is present at Asn157. The interval 207–237 (GGQEDEDSDNDNAHLLPRDLEGSTNPKFRRP) is disordered. The GPI-anchor amidated serine moiety is linked to residue Ser329. Positions 330–348 (STSLSTNFAILLAVIYVLY) are cleaved as a propeptide — removed in mature form.

It belongs to the ephrin family. Interacts with lat-2. Post-translationally, may undergo proteolysis by metalloprotease sup-17 to give rise to a soluble form.

The protein resides in the cell membrane. Functionally, regulates the formation or stabilization of cell-cell contacts at several stages of epithelial morphogenesis. In early embryonic development, involved in ventral closure of the epidermis. During male tail morphogenesis, regulates precursor cell sorting together with mab-20 and allows the formation of distinct sensory rays. Probably acts as a ligand for lad-2 to regulate axon guidance of several neurons including SDQL, SDQR, SMD and PLN neurons during neurogenesis. The sequence is that of Ephrin-4 (efn-4) from Caenorhabditis elegans.